A 303-amino-acid polypeptide reads, in one-letter code: Bidirectional sugar transporter SWEET14 (303 aa).

Topologically, residues 1 to 9 are extracellular; sequence MAGMSLQHP. The helical transmembrane segment at 10-30 threads the bilayer; sequence WAFAFGLLGNIISFMTYLAPL. Residues 13–98 form the MtN3/slv 1 domain; the sequence is AFGLLGNIIS…AVYLVYAPKK (86 aa). Residues 31 to 44 lie on the Cytoplasmic side of the membrane; it reads PTFYRIYKSKSTQG. A helical membrane pass occupies residues 45–65; the sequence is FQSVPYVVALFSAMLWIYYAL. Residues 66–72 are Extracellular-facing; sequence LKSDECL. The helical transmembrane segment at 73 to 93 threads the bilayer; the sequence is LITINSAGCVIETIYIAVYLV. Residues 94 to 105 are Cytoplasmic-facing; the sequence is YAPKKAKMFTAK. Residues 106-126 form a helical membrane-spanning segment; the sequence is LLLLVNVGVFGLILLLTLLLS. Over 127–133 the chain is Extracellular; it reads AGDRRIV. The helical transmembrane segment at 134–154 threads the bilayer; it reads VLGWVCVGFSVSVFVAPLSII. Residues 134-217 form the MtN3/slv 2 domain; it reads VLGWVCVGFS…MGLYAMYRNS (84 aa). Residues 155–167 are Cytoplasmic-facing; that stretch reads RLVVRTKSVEFMP. A helical transmembrane segment spans residues 168-188; it reads FSLSFSLTISAVVWFLYGLLI. The Extracellular portion of the chain corresponds to 189-192; sequence KDKY. A helical transmembrane segment spans residues 193–213; the sequence is VALPNVLGFSFGVIQMGLYAM. Residues 214–303 are Cytoplasmic-facing; sequence YRNSTPKAVL…AGAGEKKVAA (90 aa). A disordered region spans residues 266 to 290; it reads HPVDVESPPAEAPPEEDDKAAAATA.

The protein belongs to the SWEET sugar transporter family. Forms homooligomers and/or heterooligomers.

It is found in the cell membrane. Functionally, mediates both low-affinity uptake and efflux of sugar across the plasma membrane. Its function is as follows. Confers blight susceptibility. Confers TAL effector-mediated susceptibility to Xanthomonas oryzae pv. oryzae. The protein is Bidirectional sugar transporter SWEET14 (SWEET14) of Oryza sativa subsp. japonica (Rice).